Consider the following 408-residue polypeptide: Translation initiation factor 2 subunit gamma (408 aa).

Residues 4–201 (QSEINIGLVG…TIEERIKTPK (198 aa)) enclose the tr-type G domain. Positions 13-20 (GHVDHGKT) are G1. Mg(2+) is bound by residues aspartate 16, threonine 20, glycine 41, and serine 43. Residue 16–21 (DHGKTT) participates in GTP binding. The segment at 41–45 (GISIR) is G2. Zn(2+) contacts are provided by cysteine 56, cysteine 59, cysteine 71, and cysteine 74. A G3 region spans residues 88–91 (DAPG). Residues 144 to 147 (NKID) and 179 to 181 (SAQ) contribute to the GTP site. Residues 144-147 (NKID) are G4. Residues 179–181 (SAQ) form a G5 region.

It belongs to the TRAFAC class translation factor GTPase superfamily. Classic translation factor GTPase family. EIF2G subfamily. In terms of assembly, heterotrimer composed of an alpha, a beta and a gamma chain. The cofactor is Mg(2+).

It carries out the reaction GTP + H2O = GDP + phosphate + H(+). Its function is as follows. eIF-2 functions in the early steps of protein synthesis by forming a ternary complex with GTP and initiator tRNA. This Methanothermobacter thermautotrophicus (strain ATCC 29096 / DSM 1053 / JCM 10044 / NBRC 100330 / Delta H) (Methanobacterium thermoautotrophicum) protein is Translation initiation factor 2 subunit gamma.